The sequence spans 245 residues: 2,3-bisphosphoglycerate-dependent phosphoglycerate mutase (245 aa).

Substrate contacts are provided by residues arginine 8–asparagine 15, threonine 21–glycine 22, arginine 60, glutamate 87–tyrosine 90, lysine 98, arginine 114–arginine 115, and glycine 183–asparagine 184. The active-site Tele-phosphohistidine intermediate is histidine 9. The active-site Proton donor/acceptor is the glutamate 87.

This sequence belongs to the phosphoglycerate mutase family. BPG-dependent PGAM subfamily.

It catalyses the reaction (2R)-2-phosphoglycerate = (2R)-3-phosphoglycerate. Its pathway is carbohydrate degradation; glycolysis; pyruvate from D-glyceraldehyde 3-phosphate: step 3/5. Its function is as follows. Catalyzes the interconversion of 2-phosphoglycerate and 3-phosphoglycerate. The polypeptide is 2,3-bisphosphoglycerate-dependent phosphoglycerate mutase (Bacillus cereus (strain ATCC 14579 / DSM 31 / CCUG 7414 / JCM 2152 / NBRC 15305 / NCIMB 9373 / NCTC 2599 / NRRL B-3711)).